A 389-amino-acid polypeptide reads, in one-letter code: Chromobox protein homolog 8 (389 aa).

Positions 11–69 constitute a Chromo domain; that stretch reads FAAEALLKRRIRKGRMEYLVKWKGWSQKYSTWEPEENILDARLLAAFEEREREMELYGP. Phosphoserine is present on residues Ser110 and Ser130. Residues 124–241 are disordered; sequence LRNMGLSPPA…DDTPSGAGKF (118 aa). Over residues 145-189 the composition is skewed to basic and acidic residues; sequence EAPRDRDRDRDRDRERDRERERERERERERERERERGTSRVDDKP. Phosphoserine occurs at positions 191, 256, 265, 311, 332, and 352. Positions 298–327 are disordered; it reads GALDPNGTRVRHGSGPPSSGGGLYRDMGAQ.

In terms of assembly, component of a PRC1-like complex. Interacts with RING1 RNF2, PCGF1, PCGF2, PCGF3, BMI1, PCGF5 and PCGF6. Interacts with MLLT3 and histone H3. Interacts with PHC2.

The protein resides in the nucleus. In terms of biological role, component of a Polycomb group (PcG) multiprotein PRC1-like complex, a complex class required to maintain the transcriptionally repressive state of many genes, including Hox genes, throughout development. PcG PRC1 complex acts via chromatin remodeling and modification of histones; it mediates monoubiquitination of histone H2A 'Lys-119', rendering chromatin heritably changed in its expressibility. The polypeptide is Chromobox protein homolog 8 (CBX8) (Homo sapiens (Human)).